A 994-amino-acid chain; its full sequence is Sarcoplasmic/endoplasmic reticulum calcium ATPase 1 (994 aa).

Over 1–48 (MEAAHSKSTEECLSYFGVSETTGLTPDQVKRHLEKYGPNELPAEEGKS) the chain is Cytoplasmic. A helical membrane pass occupies residues 49-69 (LWELVVEQFEDLLVRILLLAA). Residues 70 to 89 (CISFVLAWFEEGEETVTAFV) lie on the Lumenal side of the membrane. The helical transmembrane segment at 90–110 (EPFVILLILIANAIVGVWQER) threads the bilayer. Topologically, residues 111 to 253 (NAENAIEALK…QDKTPLQQKL (143 aa)) are cytoplasmic. A helical transmembrane segment spans residues 254 to 273 (DEFGEQLSKVISLICVAVWL). Residues 274–295 (INIGHFNDPVHGGSWFRGAIYY) are Lumenal-facing. The chain crosses the membrane as a helical span at residues 296 to 313 (FKIAVALAVAAIPEGLPA). Ca(2+) contacts are provided by Val304, Ala305, Ile307, and Glu309. Residues 314 to 757 (VITTCLALGT…EEGRAIYNNM (444 aa)) lie on the Cytoplasmic side of the membrane. Asp351 acts as the 4-aspartylphosphate intermediate in catalysis. Asp351 and Thr353 together coordinate Mg(2+). ATP is bound at residue Thr353. A Phosphothreonine modification is found at Thr441. ATP contacts are provided by Glu442, Arg489, Lys515, and Arg560. The residue at position 569 (Thr569) is a Phosphothreonine. A Phosphoserine modification is found at Ser581. ATP-binding residues include Thr625, Gly626, and Asp627. Ser643 is subject to Phosphoserine. ATP contacts are provided by Arg678 and Lys684. Asp703 is a Mg(2+) binding site. Asn706 serves as a coordination point for ATP. The chain crosses the membrane as a helical span at residues 758–777 (KQFIRYLISSNVGEVVCIFL). Asn768 and Glu771 together coordinate Ca(2+). The Lumenal portion of the chain corresponds to 778–787 (TAALGLPEAL). A helical membrane pass occupies residues 788–808 (IPVQLLWVNLVTDGLPATALG). Residues 788–808 (IPVQLLWVNLVTDGLPATALG) form an interaction with PLN region. Asn796, Thr799, and Asp800 together coordinate Ca(2+). Residues 809–828 (FNPPDLDIMDRPPRSPKEPL) lie on the Cytoplasmic side of the membrane. The chain crosses the membrane as a helical span at residues 829–851 (ISGWLFFRYMAIGGYVGAATVGA). At 852–897 (AAWWFLYAEDGPHVSYHQLTHFMQCTEHNPEFDGLDCEVFEAPEPM) the chain is on the lumenal side. Cys876 and Cys888 are joined by a disulfide. The helical transmembrane segment at 898 to 917 (TMALSVLVTIEMCNALNSLS) threads the bilayer. Residue Glu908 coordinates Ca(2+). Over 918 to 930 (ENQSLLRMPPWVN) the chain is Cytoplasmic. The helical transmembrane segment at 931–949 (IWLLGSICLSMSLHFLILY) threads the bilayer. Positions 932 to 943 (WLLGSICLSMSL) are interaction with PLN. Residues 950–964 (VDPLPMIFKLRALDF) are Lumenal-facing. A helical transmembrane segment spans residues 965–985 (TQWLMVLKISLPVIGLDELLK). Residues 986-994 (FIARNYLEG) are Cytoplasmic-facing.

The protein belongs to the cation transport ATPase (P-type) (TC 3.A.3) family. Type IIA subfamily. Interacts with sarcolipin (SLN). Interacts with phospholamban (PLN). Interacts with myoregulin (MRLN). Interacts with DWORF. Interacts with VMP1. Mg(2+) is required as a cofactor.

The protein localises to the endoplasmic reticulum membrane. It is found in the sarcoplasmic reticulum membrane. It catalyses the reaction Ca(2+)(in) + ATP + H2O = Ca(2+)(out) + ADP + phosphate + H(+). With respect to regulation, inhibited by sarcolipin (SLN) and myoregulin (MRLN). Has also been shown to be reversibly inhibited by phospholamban (PLN) at low calcium concentrations in vitro. Dephosphorylated PLN decreases the apparent affinity of the ATPase for calcium in vitro and this inhibition is regulated by the phosphorylation of PLN. Enhanced by DWORF; DWORF increases activity by displacing sarcolipin (SLN), phospholamban (PLN) and myoregulin (MRLN). Functionally, key regulator of striated muscle performance by acting as the major Ca(2+) ATPase responsible for the reuptake of cytosolic Ca(2+) into the sarcoplasmic reticulum. Catalyzes the hydrolysis of ATP coupled with the translocation of calcium from the cytosol to the sarcoplasmic reticulum lumen. Contributes to calcium sequestration involved in muscular excitation/contraction. In Mus musculus (Mouse), this protein is Sarcoplasmic/endoplasmic reticulum calcium ATPase 1 (Atp2a1).